The primary structure comprises 203 residues: Glycerol-3-phosphate acyltransferase (203 aa).

6 consecutive transmembrane segments (helical) span residues I5–I25, T58–A78, I87–F107, G118–I138, L150–I170, and I176–G196.

It belongs to the PlsY family. Probably interacts with PlsX.

The protein localises to the cell inner membrane. It carries out the reaction an acyl phosphate + sn-glycerol 3-phosphate = a 1-acyl-sn-glycero-3-phosphate + phosphate. It functions in the pathway lipid metabolism; phospholipid metabolism. In terms of biological role, catalyzes the transfer of an acyl group from acyl-phosphate (acyl-PO(4)) to glycerol-3-phosphate (G3P) to form lysophosphatidic acid (LPA). This enzyme utilizes acyl-phosphate as fatty acyl donor, but not acyl-CoA or acyl-ACP. This Campylobacter lari (strain RM2100 / D67 / ATCC BAA-1060) protein is Glycerol-3-phosphate acyltransferase.